The sequence spans 605 residues: Elongation factor 4 (605 aa).

Residues 9-191 form the tr-type G domain; it reads DTIRNFCIIA…AIIKRVPAPV (183 aa). Residues 21–26 and 138–141 each bind GTP; these read DHGKST and NKID.

It belongs to the TRAFAC class translation factor GTPase superfamily. Classic translation factor GTPase family. LepA subfamily.

The protein resides in the cell inner membrane. It catalyses the reaction GTP + H2O = GDP + phosphate + H(+). Its function is as follows. Required for accurate and efficient protein synthesis under certain stress conditions. May act as a fidelity factor of the translation reaction, by catalyzing a one-codon backward translocation of tRNAs on improperly translocated ribosomes. Back-translocation proceeds from a post-translocation (POST) complex to a pre-translocation (PRE) complex, thus giving elongation factor G a second chance to translocate the tRNAs correctly. Binds to ribosomes in a GTP-dependent manner. The sequence is that of Elongation factor 4 from Chlorobium phaeobacteroides (strain BS1).